A 234-amino-acid polypeptide reads, in one-letter code: Sugar fermentation stimulation protein A (234 aa).

Positions L201–S220 form a DNA-binding region, H-T-H motif.

The protein belongs to the SfsA family.

Its function is as follows. Binds to DNA non-specifically. Could be a regulatory factor involved in maltose metabolism. This chain is Sugar fermentation stimulation protein A, found in Shigella flexneri serotype 5b (strain 8401).